The following is a 367-amino-acid chain: Phosphoribosylaminoimidazole-succinocarboxamide synthase (367 aa).

It belongs to the SAICAR synthetase family.

It carries out the reaction 5-amino-1-(5-phospho-D-ribosyl)imidazole-4-carboxylate + L-aspartate + ATP = (2S)-2-[5-amino-1-(5-phospho-beta-D-ribosyl)imidazole-4-carboxamido]succinate + ADP + phosphate + 2 H(+). The protein operates within purine metabolism; IMP biosynthesis via de novo pathway; 5-amino-1-(5-phospho-D-ribosyl)imidazole-4-carboxamide from 5-amino-1-(5-phospho-D-ribosyl)imidazole-4-carboxylate: step 1/2. The polypeptide is Phosphoribosylaminoimidazole-succinocarboxamide synthase (Vibrio parahaemolyticus serotype O3:K6 (strain RIMD 2210633)).